The chain runs to 499 residues: Multiphosphoryl transfer protein (499 aa).

Positions 2–142 (LELSESNIHL…AEFCAILMGE (141 aa)) constitute a PTS EIIA type-2 domain. The active-site Tele-phosphohistidine intermediate; for EIIA activity is His62. At His62 the chain carries Phosphohistidine; by HPr. The segment at 155–285 (SLDVNTQSLL…SDVETQSVEG (131 aa)) is m domain. The HPr 1 domain occupies 286–376 (AVVGTFTIRN…KAIANGLGEN (91 aa)). His300 (pros-phosphohistidine intermediate; for HPr 1 activity) is an active-site residue. His300 is modified (phosphohistidine). The segment at 378–409 (SAVPPSEPDTIEIMGDQIHTPAVTEDDNLPAN) is linker. The HPr 2 domain maps to 410 to 499 (AIEAVFVIKN…GAVIESGLGE (90 aa)). The residue at position 424 (His424) is a Phosphohistidine. Residue His424 is the Pros-phosphohistidine intermediate; for HPr 2 activity of the active site.

The protein resides in the cytoplasm. In terms of biological role, the phosphoenolpyruvate-dependent sugar phosphotransferase system (sugar PTS), a major carbohydrate active transport system, catalyzes the phosphorylation of incoming sugar substrates concomitantly with their translocation across the cell membrane. The enzyme II FruAB PTS system is involved in fructose transport. This Haemophilus influenzae (strain ATCC 51907 / DSM 11121 / KW20 / Rd) protein is Multiphosphoryl transfer protein (fruB).